Here is a 292-residue protein sequence, read N- to C-terminus: Phosphatidylglycerol--prolipoprotein diacylglyceryl transferase (292 aa).

A run of 7 helical transmembrane segments spans residues 21-41, 60-80, 98-118, 124-144, 198-218, 225-245, and 258-278; these read VSLHWYGLMYLVGFVFAMWLA, LLYAGFLGVFLGGRIGYVLFY, GGMSFHGGLIGVIVVMLVFAH, FFQVADFIAPLIPFGLGAGRL, SQLYELILEGVVLFIILNLFI, GAVSGLFLIGYGAFRIIVEFF, and ISMGQILSLPMILAGVIMMIW. An a 1,2-diacyl-sn-glycero-3-phospho-(1'-sn-glycerol)-binding site is contributed by Arg143.

The protein belongs to the Lgt family.

It is found in the cell inner membrane. The enzyme catalyses L-cysteinyl-[prolipoprotein] + a 1,2-diacyl-sn-glycero-3-phospho-(1'-sn-glycerol) = an S-1,2-diacyl-sn-glyceryl-L-cysteinyl-[prolipoprotein] + sn-glycerol 1-phosphate + H(+). The protein operates within protein modification; lipoprotein biosynthesis (diacylglyceryl transfer). Its function is as follows. Catalyzes the transfer of the diacylglyceryl group from phosphatidylglycerol to the sulfhydryl group of the N-terminal cysteine of a prolipoprotein, the first step in the formation of mature lipoproteins. This Erwinia tasmaniensis (strain DSM 17950 / CFBP 7177 / CIP 109463 / NCPPB 4357 / Et1/99) protein is Phosphatidylglycerol--prolipoprotein diacylglyceryl transferase.